The chain runs to 126 residues: MARLLLVCLGGALGSGARYLTSAWALRAFGPDFPRGTLLVNVSGSFLLAGIMTASLQSEAVPPDLRLFLAAGVMGGFTTYSSFNYETLALVEQGRLAAAAAYLLATVVGCLVAAFAATLLVRWLAG.

Transmembrane regions (helical) follow at residues 4 to 24, 36 to 56, 67 to 85, and 101 to 121; these read LLLV…TSAW, GTLL…TASL, LFLA…SFNY, and AYLL…TLLV. Residues G75 and T78 each coordinate Na(+).

This sequence belongs to the fluoride channel Fluc/FEX (TC 1.A.43) family.

Its subcellular location is the cell inner membrane. The enzyme catalyses fluoride(in) = fluoride(out). With respect to regulation, na(+) is not transported, but it plays an essential structural role and its presence is essential for fluoride channel function. Functionally, fluoride-specific ion channel. Important for reducing fluoride concentration in the cell, thus reducing its toxicity. In Anaeromyxobacter sp. (strain K), this protein is Fluoride-specific ion channel FluC.